A 364-amino-acid polypeptide reads, in one-letter code: Chorismate synthase (364 aa).

Residue arginine 48 coordinates NADP(+). Residues 131-133 (RSS), 243-244 (NA), glycine 288, 303-307 (KPTSS), and arginine 329 contribute to the FMN site.

Belongs to the chorismate synthase family. As to quaternary structure, homotetramer. The cofactor is FMNH2.

It carries out the reaction 5-O-(1-carboxyvinyl)-3-phosphoshikimate = chorismate + phosphate. The protein operates within metabolic intermediate biosynthesis; chorismate biosynthesis; chorismate from D-erythrose 4-phosphate and phosphoenolpyruvate: step 7/7. Catalyzes the anti-1,4-elimination of the C-3 phosphate and the C-6 proR hydrogen from 5-enolpyruvylshikimate-3-phosphate (EPSP) to yield chorismate, which is the branch point compound that serves as the starting substrate for the three terminal pathways of aromatic amino acid biosynthesis. This reaction introduces a second double bond into the aromatic ring system. This chain is Chorismate synthase, found in Brucella melitensis biotype 2 (strain ATCC 23457).